The chain runs to 63 residues: Toxin S6C6 (63 aa).

5 disulfides stabilise this stretch: Cys-3–Cys-24, Cys-6–Cys-11, Cys-17–Cys-39, Cys-43–Cys-55, and Cys-56–Cys-61.

It belongs to the three-finger toxin family. Ancestral subfamily. Orphan group XIX sub-subfamily. As to expression, expressed by the venom gland.

The protein localises to the secreted. Functionally, may enhance presynaptic acetylcholine release. This Dendroaspis jamesoni kaimosae (Eastern Jameson's mamba) protein is Toxin S6C6.